The chain runs to 361 residues: DNA polymerase subunit gamma-2, mitochondrial (361 aa).

The transit peptide at 1–18 (MSRIQRCFKSLASAGFFR) directs the protein to the mitochondrion.

As to quaternary structure, component of the DNA polymerase gamma complex consisting of two subunits: the catalytic subunit DNApol-gamma/DNApolG1 and the accessory subunit PolG2/DNApol-gamma35. In terms of tissue distribution, expressed in ovaries (at protein level).

It is found in the mitochondrion. In terms of biological role, as accessory component of the DNA polymerase gamma complex is involved in the replication of mitochondrial DNA. Does not bind DNA. Essential for mitochondrial DNA maintenance and larval development. The polypeptide is DNA polymerase subunit gamma-2, mitochondrial (Drosophila melanogaster (Fruit fly)).